Here is a 178-residue protein sequence, read N- to C-terminus: Large ribosomal subunit protein uL6 (178 aa).

It belongs to the universal ribosomal protein uL6 family. Part of the 50S ribosomal subunit.

Functionally, this protein binds to the 23S rRNA, and is important in its secondary structure. It is located near the subunit interface in the base of the L7/L12 stalk, and near the tRNA binding site of the peptidyltransferase center. The sequence is that of Large ribosomal subunit protein uL6 from Helicobacter pylori (strain Shi470).